The chain runs to 313 residues: Acetaldehyde dehydrogenase 1 (313 aa).

NAD(+) is bound at residue 16–19 (SGNI). The active-site Acyl-thioester intermediate is cysteine 131. NAD(+) contacts are provided by residues 162 to 170 (SAGPGTRAN) and asparagine 281.

It belongs to the acetaldehyde dehydrogenase family.

It carries out the reaction acetaldehyde + NAD(+) + CoA = acetyl-CoA + NADH + H(+). The chain is Acetaldehyde dehydrogenase 1 from Mycobacterium sp. (strain JLS).